The following is a 626-amino-acid chain: Hemocyanin AA6 chain (626 aa).

The Cu cation site is built by H170, H174, H201, H321, H325, and H361. S374 carries the phosphoserine modification.

It belongs to the tyrosinase family. Hemocyanin subfamily. In terms of assembly, scorpion hemocyanin is a 24-chain polymer with 8 different chains identified, assembled in hexameric substructures. Post-translationally, three disulfide bonds are present. In terms of tissue distribution, hemolymph.

The protein resides in the secreted. Its subcellular location is the extracellular space. Functionally, hemocyanins are copper-containing oxygen carriers occurring freely dissolved in the hemolymph of many mollusks and arthropods. In Androctonus australis (Sahara scorpion), this protein is Hemocyanin AA6 chain.